Here is a 596-residue protein sequence, read N- to C-terminus: Malto-oligosyltrehalose trehalohydrolase (596 aa).

Position 263–268 (263–268 (RLDAVH)) interacts with substrate. The Nucleophile role is filled by aspartate 265. Residue glutamate 302 is the Proton donor of the active site. Substrate contacts are provided by residues 327 to 331 (DDFHH) and 397 to 402 (HDQIGN).

Belongs to the glycosyl hydrolase 13 family.

The protein resides in the cytoplasm. The catalysed reaction is hydrolysis of (1-&gt;4)-alpha-D-glucosidic linkage in 4-alpha-D-[(1-&gt;4)-alpha-D-glucanosyl]n trehalose to yield trehalose and (1-&gt;4)-alpha-D-glucan.. It participates in glycan biosynthesis; trehalose biosynthesis. The sequence is that of Malto-oligosyltrehalose trehalohydrolase (treZ) from Rhizobium sp. (strain M-11).